The primary structure comprises 538 residues: Chaperonin GroEL (538 aa).

ATP contacts are provided by residues 29-32 (TIGP), 86-90 (DGTTT), G413, 476-478 (NAA), and D492.

It belongs to the chaperonin (HSP60) family. Forms a cylinder of 14 subunits composed of two heptameric rings stacked back-to-back. Interacts with the co-chaperonin GroES.

It is found in the cytoplasm. The catalysed reaction is ATP + H2O + a folded polypeptide = ADP + phosphate + an unfolded polypeptide.. In terms of biological role, together with its co-chaperonin GroES, plays an essential role in assisting protein folding. The GroEL-GroES system forms a nano-cage that allows encapsulation of the non-native substrate proteins and provides a physical environment optimized to promote and accelerate protein folding. This Staphylococcus aureus (strain USA300) protein is Chaperonin GroEL.